The primary structure comprises 303 residues: Imidazoleglycerol-phosphate dehydratase (303 aa).

This sequence belongs to the imidazoleglycerol-phosphate dehydratase family.

Its subcellular location is the cytoplasm. The enzyme catalyses D-erythro-1-(imidazol-4-yl)glycerol 3-phosphate = 3-(imidazol-4-yl)-2-oxopropyl phosphate + H2O. It participates in amino-acid biosynthesis; L-histidine biosynthesis; L-histidine from 5-phospho-alpha-D-ribose 1-diphosphate: step 6/9. This Neisseria gonorrhoeae (strain ATCC 700825 / FA 1090) protein is Imidazoleglycerol-phosphate dehydratase.